The following is a 464-amino-acid chain: Protein FAM90A12 (464 aa).

Disordered regions lie at residues 1–42 (MMAR…DPRL), 70–389 (PATL…HDGA), and 411–437 (APSF…SEAP). 2 stretches are compositionally biased toward basic and acidic residues: residues 74 to 89 (GKKE…KPRA) and 97 to 114 (NKDK…DPQR). Over residues 180–197 (LASLSPLRKASLSSSSSL) the composition is skewed to low complexity.

It belongs to the FAM90 family.

The chain is Protein FAM90A12 from Homo sapiens (Human).